A 311-amino-acid chain; its full sequence is Phosphopantothenate--cysteine ligase (311 aa).

Ala2 is subject to N-acetylalanine.

Belongs to the PPC synthetase family. Homodimer.

It catalyses the reaction (R)-4'-phosphopantothenate + L-cysteine + ATP = N-[(R)-4-phosphopantothenoyl]-L-cysteine + AMP + diphosphate + H(+). It carries out the reaction (R)-4'-phosphopantothenate + L-cysteine + CTP = N-[(R)-4-phosphopantothenoyl]-L-cysteine + CMP + diphosphate + H(+). The protein operates within cofactor biosynthesis; coenzyme A biosynthesis; CoA from (R)-pantothenate: step 2/5. Functionally, catalyzes the second step in the biosynthesis of coenzyme A from vitamin B5, where cysteine is conjugated to 4'-phosphopantothenate to form 4-phosphopantothenoylcysteine. Has a preference for ATP over CTP as a cosubstrate. The chain is Phosphopantothenate--cysteine ligase (PPCS) from Homo sapiens (Human).